Consider the following 1212-residue polypeptide: Nucleolar protein 6 (1212 aa).

2 disordered regions span residues 1-72 and 1156-1212; these read MGKI…PVSI and KREQ…KSLS. The segment covering 1197–1212 has biased composition (basic residues); the sequence is LKRKSLIKSRPLKSLS.

This sequence belongs to the NRAP family. In terms of assembly, part of the small subunit (SSU) processome, composed of more than 70 proteins and the RNA chaperone small nucleolar RNA (snoRNA) U3.

It localises to the nucleus. The protein resides in the nucleolus. It is found in the chromosome. Its function is as follows. Part of the small subunit (SSU) processome, first precursor of the small eukaryotic ribosomal subunit. During the assembly of the SSU processome in the nucleolus, many ribosome biogenesis factors, an RNA chaperone and ribosomal proteins associate with the nascent pre-rRNA and work in concert to generate RNA folding, modifications, rearrangements and cleavage as well as targeted degradation of pre-ribosomal RNA by the RNA exosome. This Drosophila persimilis (Fruit fly) protein is Nucleolar protein 6.